Reading from the N-terminus, the 323-residue chain is Cobalamin biosynthesis protein CobD (323 aa).

5 helical membrane-spanning segments follow: residues 52–72 (IAGVLLLALTVTSAASVTWLM), 73–93 (VWGSARLHALAGLMVAALLSS), 154–174 (DGIIAPLFWLALGGPVAGMAF), 214–234 (ALLMVMVAPLIGLSQANAASI), and 294–314 (IRLMYATTLAMAVISLATAAL).

Belongs to the CobD/CbiB family.

The protein localises to the cell membrane. It participates in cofactor biosynthesis; adenosylcobalamin biosynthesis. Converts cobyric acid to cobinamide by the addition of aminopropanol on the F carboxylic group. The protein is Cobalamin biosynthesis protein CobD of Pelobacter propionicus (strain DSM 2379 / NBRC 103807 / OttBd1).